Consider the following 432-residue polypeptide: 3-phosphoshikimate 1-carboxyvinyltransferase (432 aa).

3-phosphoshikimate is bound by residues Lys23, Ser24, and Arg28. Lys23 serves as a coordination point for phosphoenolpyruvate. Residues Gly95 and Arg123 each contribute to the phosphoenolpyruvate site. 3-phosphoshikimate is bound by residues Ser167, Gln169, Asp317, and Lys344. Gln169 is a binding site for phosphoenolpyruvate. Residue Asp317 is the Proton acceptor of the active site. Residues Arg348 and Arg390 each contribute to the phosphoenolpyruvate site.

Belongs to the EPSP synthase family. In terms of assembly, monomer.

The protein resides in the cytoplasm. The catalysed reaction is 3-phosphoshikimate + phosphoenolpyruvate = 5-O-(1-carboxyvinyl)-3-phosphoshikimate + phosphate. The protein operates within metabolic intermediate biosynthesis; chorismate biosynthesis; chorismate from D-erythrose 4-phosphate and phosphoenolpyruvate: step 6/7. In terms of biological role, catalyzes the transfer of the enolpyruvyl moiety of phosphoenolpyruvate (PEP) to the 5-hydroxyl of shikimate-3-phosphate (S3P) to produce enolpyruvyl shikimate-3-phosphate and inorganic phosphate. This chain is 3-phosphoshikimate 1-carboxyvinyltransferase, found in Staphylococcus aureus (strain JH9).